Here is a 370-residue protein sequence, read N- to C-terminus: MAVSFTITYKDESTGARLGLLYTPHGTVETPVFMPVGTQATVKTMTPEEVRDIGGRMILSNTYHLYLRPGHELIREAGGLHRFMHWDGPILTDSGGFQVFSLGPLRKVSEEGVAFRSHIDGSEHFFSPEKAMEVQMALGSDIAMAFDECAPYPCSREYALAATERTTRWARRCRTAHDREDQGLFGIVQGGTFKDLRERSARELVELDFPGYAIGGLSVGEPKQLMYEVLDYTVPLLPEEKPRYLMGVGSPDCLVEGVLRGIDMFDCVLPTRIARNGTALTRQGRLVVRNAEYARDFSPLEPDCDCYACRNYTRAYIRHLIKANEILGIRLTTIHNLYFIMKLMEEIRAAVRQGRMLQFRDDFLRKYQGD.

Asp-93 acts as the Proton acceptor in catalysis. Substrate-binding positions include 93–97, Asp-147, Gln-189, and Gly-216; that span reads DSGGF. Positions 247–253 are RNA binding; the sequence is GVGSPDC. Asp-266 functions as the Nucleophile in the catalytic mechanism. The segment at 271 to 275 is RNA binding; important for wobble base 34 recognition; sequence TRIAR. Positions 304, 306, 309, and 335 each coordinate Zn(2+).

It belongs to the queuine tRNA-ribosyltransferase family. Homodimer. Within each dimer, one monomer is responsible for RNA recognition and catalysis, while the other monomer binds to the replacement base PreQ1. The cofactor is Zn(2+).

The catalysed reaction is 7-aminomethyl-7-carbaguanine + guanosine(34) in tRNA = 7-aminomethyl-7-carbaguanosine(34) in tRNA + guanine. Its pathway is tRNA modification; tRNA-queuosine biosynthesis. In terms of biological role, catalyzes the base-exchange of a guanine (G) residue with the queuine precursor 7-aminomethyl-7-deazaguanine (PreQ1) at position 34 (anticodon wobble position) in tRNAs with GU(N) anticodons (tRNA-Asp, -Asn, -His and -Tyr). Catalysis occurs through a double-displacement mechanism. The nucleophile active site attacks the C1' of nucleotide 34 to detach the guanine base from the RNA, forming a covalent enzyme-RNA intermediate. The proton acceptor active site deprotonates the incoming PreQ1, allowing a nucleophilic attack on the C1' of the ribose to form the product. After dissociation, two additional enzymatic reactions on the tRNA convert PreQ1 to queuine (Q), resulting in the hypermodified nucleoside queuosine (7-(((4,5-cis-dihydroxy-2-cyclopenten-1-yl)amino)methyl)-7-deazaguanosine). The protein is Queuine tRNA-ribosyltransferase of Pelotomaculum thermopropionicum (strain DSM 13744 / JCM 10971 / SI).